Here is a 588-residue protein sequence, read N- to C-terminus: Lysophospholipase 2 (588 aa).

Residues 15–38 are disordered; that stretch reads NRALPNAPDGYTPQGETCPSKRPS. Residues 31-574 enclose the PLA2c domain; sequence TCPSKRPSIR…KTYCWNGTIN (544 aa). Residues Asn41, Asn58, Asn77, Asn84, Asn88, Asn119, Asn123, Asn157, Asn167, Asn228, Asn272, Asn302, Asn340, Asn431, Asn449, Asn478, Asn481, Asn501, Asn510, Asn529, Asn553, Asn570, and Asn574 are each glycosylated (N-linked (GlcNAc...) asparagine).

This sequence belongs to the lysophospholipase family.

It carries out the reaction a 1-acyl-sn-glycero-3-phosphocholine + H2O = sn-glycerol 3-phosphocholine + a fatty acid + H(+). Catalyzes the release of fatty acids from lysophospholipids. This chain is Lysophospholipase 2 (plb2), found in Aspergillus fumigatus (strain ATCC MYA-4609 / CBS 101355 / FGSC A1100 / Af293) (Neosartorya fumigata).